The following is a 268-amino-acid chain: Tryptophan synthase alpha chain (268 aa).

Residues Glu-49 and Asp-60 each act as proton acceptor in the active site.

Belongs to the TrpA family. As to quaternary structure, tetramer of two alpha and two beta chains.

The enzyme catalyses (1S,2R)-1-C-(indol-3-yl)glycerol 3-phosphate + L-serine = D-glyceraldehyde 3-phosphate + L-tryptophan + H2O. It functions in the pathway amino-acid biosynthesis; L-tryptophan biosynthesis; L-tryptophan from chorismate: step 5/5. Its function is as follows. The alpha subunit is responsible for the aldol cleavage of indoleglycerol phosphate to indole and glyceraldehyde 3-phosphate. The protein is Tryptophan synthase alpha chain of Mannheimia succiniciproducens (strain KCTC 0769BP / MBEL55E).